The sequence spans 168 residues: INO80 complex subunit 3 (168 aa).

Positions 115–129 (TNSTLSTPKSFHSPL) are enriched in polar residues. The tract at residues 115-168 (TNSTLSTPKSFHSPLQSRGISPSSAQSSAAVSSSRKQKRKRTSEGPSERRARKK) is disordered. Low complexity predominate over residues 130–148 (QSRGISPSSAQSSAAVSSS). Positions 156–168 (TSEGPSERRARKK) are enriched in basic and acidic residues.

As to quaternary structure, component of the INO80 chromatin remodeling complex.

The protein resides in the nucleus. Functionally, component of the INO80 complex which remodels chromatin by shifting nucleosomes and is involved in DNA repair. This is INO80 complex subunit 3 (iec3) from Schizosaccharomyces pombe (strain 972 / ATCC 24843) (Fission yeast).